Here is a 401-residue protein sequence, read N- to C-terminus: Dual-specificity RNA methyltransferase RlmN (401 aa).

Glutamate 114 functions as the Proton acceptor in the catalytic mechanism. Residues 120-365 (DKGRGTLCVS…TMVRRTRGDD (246 aa)) enclose the Radical SAM core domain. An intrachain disulfide couples cysteine 127 to cysteine 370. [4Fe-4S] cluster contacts are provided by cysteine 134, cysteine 138, and cysteine 141. Residues 187–188 (GE), serine 219, 241–243 (SLH), and asparagine 327 contribute to the S-adenosyl-L-methionine site. The S-methylcysteine intermediate role is filled by cysteine 370.

It belongs to the radical SAM superfamily. RlmN family. It depends on [4Fe-4S] cluster as a cofactor.

The protein localises to the cytoplasm. The catalysed reaction is adenosine(2503) in 23S rRNA + 2 reduced [2Fe-2S]-[ferredoxin] + 2 S-adenosyl-L-methionine = 2-methyladenosine(2503) in 23S rRNA + 5'-deoxyadenosine + L-methionine + 2 oxidized [2Fe-2S]-[ferredoxin] + S-adenosyl-L-homocysteine. The enzyme catalyses adenosine(37) in tRNA + 2 reduced [2Fe-2S]-[ferredoxin] + 2 S-adenosyl-L-methionine = 2-methyladenosine(37) in tRNA + 5'-deoxyadenosine + L-methionine + 2 oxidized [2Fe-2S]-[ferredoxin] + S-adenosyl-L-homocysteine. Specifically methylates position 2 of adenine 2503 in 23S rRNA and position 2 of adenine 37 in tRNAs. m2A2503 modification seems to play a crucial role in the proofreading step occurring at the peptidyl transferase center and thus would serve to optimize ribosomal fidelity. In Xanthomonas campestris pv. campestris (strain 8004), this protein is Dual-specificity RNA methyltransferase RlmN.